Here is a 237-residue protein sequence, read N- to C-terminus: Ribosomal RNA small subunit methyltransferase G (237 aa).

S-adenosyl-L-methionine contacts are provided by residues Gly-78, Phe-83, 129-130 (AE), and Arg-148.

The protein belongs to the methyltransferase superfamily. RNA methyltransferase RsmG family.

It localises to the cytoplasm. In terms of biological role, specifically methylates the N7 position of a guanine in 16S rRNA. In Streptococcus equi subsp. zooepidemicus (strain H70), this protein is Ribosomal RNA small subunit methyltransferase G.